A 101-amino-acid chain; its full sequence is Protein Tat (101 aa).

Positions 1–24 (MEPVDPNLEPWNHPGSQPKTACNN) are interaction with human CREBBP. The transactivation stretch occupies residues 1-48 (MEPVDPNLEPWNHPGSQPKTACNNCYCKRCSYHCLVCFQTKGLGISYG). 3 residues coordinate Zn(2+): cysteine 22, cysteine 25, and cysteine 27. Residues 22 to 37 (CNNCYCKRCSYHCLVC) form a cysteine-rich region. Lysine 28 is modified (N6-acetyllysine; by host PCAF). 4 residues coordinate Zn(2+): cysteine 30, histidine 33, cysteine 34, and cysteine 37. A core region spans residues 38-48 (FQTKGLGISYG). Residues 47 to 101 (YGRKKRRQRRSAPPSSEDHQNPIPKQPLPQTRGDQTGSEESKKKVESKTETDPFD) form a disordered region. The Nuclear localization signal, RNA-binding (TAR), and protein transduction motif lies at 49 to 57 (RKKRRQRRS). Residues 49 to 86 (RKKRRQRRSAPPSSEDHQNPIPKQPLPQTRGDQTGSEE) form an interaction with the host capping enzyme RNGTT region. 2 positions are modified to N6-acetyllysine; by host EP300 and GCN5L2: lysine 50 and lysine 51. 2 positions are modified to asymmetric dimethylarginine; by host PRMT6: arginine 52 and arginine 53. A Glycyl lysine isopeptide (Lys-Gly) (interchain with G-Cter in ubiquitin) cross-link involves residue lysine 71. A Cell attachment site motif is present at residues 78 to 80 (RGD). Positions 85–101 (EESKKKVESKTETDPFD) are enriched in basic and acidic residues.

The protein belongs to the lentiviruses Tat family. In terms of assembly, interacts with host CCNT1. Associates with the P-TEFb complex composed at least of Tat, P-TEFb (CDK9 and CCNT1), TAR RNA, RNA Pol II. Recruits the HATs CREBBP, TAF1/TFIID, EP300, PCAF and GCN5L2. Interacts with host KAT5/Tip60; this interaction targets the latter to degradation. Interacts with the host deacetylase SIRT1. Interacts with host capping enzyme RNGTT; this interaction stimulates RNGTT. Binds to host KDR, and to the host integrins ITGAV/ITGB3 and ITGA5/ITGB1. Interacts with host KPNB1/importin beta-1 without previous binding to KPNA1/importin alpha-1. Interacts with EIF2AK2. Interacts with host nucleosome assembly protein NAP1L1; this interaction may be required for the transport of Tat within the nucleus, since the two proteins interact at the nuclear rim. Interacts with host C1QBP/SF2P32; this interaction involves lysine-acetylated Tat. Interacts with the host chemokine receptors CCR2, CCR3 and CXCR4. Interacts with host DPP4/CD26; this interaction may trigger an anti-proliferative effect. Interacts with host LDLR. Interacts with the host extracellular matrix metalloproteinase MMP1. Interacts with host PRMT6; this interaction mediates Tat's methylation. Interacts with, and is ubiquitinated by MDM2/Hdm2. Interacts with host PSMC3 and HTATIP2. Interacts with STAB1; this interaction may overcome SATB1-mediated repression of IL2 and IL2RA (interleukin) in T cells by binding to the same domain than HDAC1. Interacts (when acetylated) with human CDK13, thereby increasing HIV-1 mRNA splicing and promoting the production of the doubly spliced HIV-1 protein Nef. Interacts with host TBP; this interaction modulates the activity of transcriptional pre-initiation complex. Interacts with host RELA. Interacts with host PLSCR1; this interaction negatively regulates Tat transactivation activity by altering its subcellular distribution. In terms of processing, asymmetrical arginine methylation by host PRMT6 seems to diminish the transactivation capacity of Tat and affects the interaction with host CCNT1. Acetylation by EP300, CREBBP, GCN5L2/GCN5 and PCAF regulates the transactivation activity of Tat. EP300-mediated acetylation of Lys-50 promotes dissociation of Tat from the TAR RNA through the competitive binding to PCAF's bromodomain. In addition, the non-acetylated Tat's N-terminus can also interact with PCAF. PCAF-mediated acetylation of Lys-28 enhances Tat's binding to CCNT1. Lys-50 is deacetylated by SIRT1. Post-translationally, polyubiquitination by host MDM2 does not target Tat to degradation, but activates its transactivation function and fosters interaction with CCNT1 and TAR RNA. In terms of processing, phosphorylated by EIF2AK2 on serine and threonine residues adjacent to the basic region important for TAR RNA binding and function. Phosphorylation of Tat by EIF2AK2 is dependent on the prior activation of EIF2AK2 by dsRNA.

It localises to the host nucleus. The protein localises to the host nucleolus. The protein resides in the host cytoplasm. Its subcellular location is the secreted. Its function is as follows. Transcriptional activator that increases RNA Pol II processivity, thereby increasing the level of full-length viral transcripts. Recognizes a hairpin structure at the 5'-LTR of the nascent viral mRNAs referred to as the transactivation responsive RNA element (TAR) and recruits the cyclin T1-CDK9 complex (P-TEFb complex) that will in turn hyperphosphorylate the RNA polymerase II to allow efficient elongation. The CDK9 component of P-TEFb and other Tat-activated kinases hyperphosphorylate the C-terminus of RNA Pol II that becomes stabilized and much more processive. Other factors such as HTATSF1/Tat-SF1, SUPT5H/SPT5, and HTATIP2 are also important for Tat's function. Besides its effect on RNA Pol II processivity, Tat induces chromatin remodeling of proviral genes by recruiting the histone acetyltransferases (HATs) CREBBP, EP300 and PCAF to the chromatin. This also contributes to the increase in proviral transcription rate, especially when the provirus integrates in transcriptionally silent region of the host genome. To ensure maximal activation of the LTR, Tat mediates nuclear translocation of NF-kappa-B by interacting with host RELA. Through its interaction with host TBP, Tat may also modulate transcription initiation. Tat can reactivate a latently infected cell by penetrating in it and transactivating its LTR promoter. In the cytoplasm, Tat is thought to act as a translational activator of HIV-1 mRNAs. In terms of biological role, extracellular circulating Tat can be endocytosed by surrounding uninfected cells via the binding to several surface receptors such as CD26, CXCR4, heparan sulfate proteoglycans (HSPG) or LDLR. Neurons are rarely infected, but they internalize Tat via their LDLR. Through its interaction with nuclear HATs, Tat is potentially able to control the acetylation-dependent cellular gene expression. Modulates the expression of many cellular genes involved in cell survival, proliferation or in coding for cytokines or cytokine receptors. Tat plays a role in T-cell and neurons apoptosis. Tat induced neurotoxicity and apoptosis probably contribute to neuroAIDS. Circulating Tat also acts as a chemokine-like and/or growth factor-like molecule that binds to specific receptors on the surface of the cells, affecting many cellular pathways. In the vascular system, Tat binds to ITGAV/ITGB3 and ITGA5/ITGB1 integrins dimers at the surface of endothelial cells and competes with bFGF for heparin-binding sites, leading to an excess of soluble bFGF. This is Protein Tat from Human immunodeficiency virus type 1 group M subtype C (isolate 92BR025) (HIV-1).